We begin with the raw amino-acid sequence, 336 residues long: Pyridoxal 5'-phosphate synthase subunit PdxS (336 aa).

Aspartate 30 is a D-ribose 5-phosphate binding site. The Schiff-base intermediate with D-ribose 5-phosphate role is filled by lysine 87. Glycine 159 serves as a coordination point for D-ribose 5-phosphate. Arginine 171 contacts D-glyceraldehyde 3-phosphate. D-ribose 5-phosphate contacts are provided by residues glycine 257 and 278-279 (GS).

Belongs to the PdxS/SNZ family. In terms of assembly, in the presence of PdxT, forms a dodecamer of heterodimers.

The enzyme catalyses aldehydo-D-ribose 5-phosphate + D-glyceraldehyde 3-phosphate + L-glutamine = pyridoxal 5'-phosphate + L-glutamate + phosphate + 3 H2O + H(+). Its pathway is cofactor biosynthesis; pyridoxal 5'-phosphate biosynthesis. Catalyzes the formation of pyridoxal 5'-phosphate from ribose 5-phosphate (RBP), glyceraldehyde 3-phosphate (G3P) and ammonia. The ammonia is provided by the PdxT subunit. Can also use ribulose 5-phosphate and dihydroxyacetone phosphate as substrates, resulting from enzyme-catalyzed isomerization of RBP and G3P, respectively. The chain is Pyridoxal 5'-phosphate synthase subunit PdxS from Thermoplasma volcanium (strain ATCC 51530 / DSM 4299 / JCM 9571 / NBRC 15438 / GSS1).